The sequence spans 186 residues: High mobility group protein B4 (186 aa).

2 DNA-binding regions (HMG box) span residues 9 to 79 (PKAN…MNYV) and 93 to 161 (PRRP…ELYR). The segment at 77–98 (NYVGKRKKRRKRDPQEPRRPPS) is disordered.

Belongs to the HMGB family.

It localises to the nucleus. Its subcellular location is the chromosome. This chain is High mobility group protein B4 (HMGB4), found in Homo sapiens (Human).